The following is a 417-amino-acid chain: Glucose-1-phosphate adenylyltransferase (417 aa).

Alpha-D-glucose 1-phosphate contacts are provided by residues tyrosine 98, glycine 163, 178–179 (EK), and serine 197.

This sequence belongs to the bacterial/plant glucose-1-phosphate adenylyltransferase family. In terms of assembly, homotetramer.

It catalyses the reaction alpha-D-glucose 1-phosphate + ATP + H(+) = ADP-alpha-D-glucose + diphosphate. The protein operates within glycan biosynthesis; glycogen biosynthesis. Functionally, involved in the biosynthesis of ADP-glucose, a building block required for the elongation reactions to produce glycogen. Catalyzes the reaction between ATP and alpha-D-glucose 1-phosphate (G1P) to produce pyrophosphate and ADP-Glc. This is Glucose-1-phosphate adenylyltransferase from Koribacter versatilis (strain Ellin345).